A 345-amino-acid polypeptide reads, in one-letter code: Myb/SANT-like DNA-binding domain-containing protein 4 (345 aa).

The 74-residue stretch at 4-77 (LKRKRKSNFS…EVKRRYLDWR (74 aa)) folds into the Myb-like domain. A Glycyl lysine isopeptide (Lys-Gly) (interchain with G-Cter in SUMO2) cross-link involves residue lysine 9. At serine 106 the chain carries Phosphoserine. Glycyl lysine isopeptide (Lys-Gly) (interchain with G-Cter in SUMO2) cross-links involve residues lysine 114 and lysine 142. The disordered stretch occupies residues 143-175 (VEEEERDPQSPEFEIEEEEEMLSSVIPDSRREN). Residue threonine 188 is modified to Phosphothreonine. Residues 203 to 345 (LLVNIEKQKL…LRIQKEGHLQ (143 aa)) are a coiled coil. Residues lysine 237, lysine 254, and lysine 273 each participate in a glycyl lysine isopeptide (Lys-Gly) (interchain with G-Cter in SUMO2) cross-link.

In Homo sapiens (Human), this protein is Myb/SANT-like DNA-binding domain-containing protein 4 (MSANTD4).